A 316-amino-acid chain; its full sequence is Pantothenate kinase (316 aa).

95–102 contributes to the ATP binding site; that stretch reads GSVAVGKS.

This sequence belongs to the prokaryotic pantothenate kinase family.

Its subcellular location is the cytoplasm. It catalyses the reaction (R)-pantothenate + ATP = (R)-4'-phosphopantothenate + ADP + H(+). It functions in the pathway cofactor biosynthesis; coenzyme A biosynthesis; CoA from (R)-pantothenate: step 1/5. The polypeptide is Pantothenate kinase (Salmonella agona (strain SL483)).